A 699-amino-acid polypeptide reads, in one-letter code: Putative inactive kinesin-like protein KIN-7B (699 aa).

The 170-residue stretch at 1–170 (MRAIQKKSLC…LLFGSCAKEV (170 aa)) folds into the Kinesin motor domain. A coiled-coil region spans residues 179–247 (VMSDKALVKH…QSRLQDLLQS (69 aa)). The tract at residues 249–345 (GDHDLNRQVQ…VNSRHSRPSG (97 aa)) is disordered. A compositionally biased stretch (low complexity) spans 264 to 275 (RSPPSVGMPPSV). Basic and acidic residues predominate over residues 276-298 (SRDDSSQVSHDDSDLYKEVRCIE). A compositionally biased stretch (polar residues) spans 313-338 (GESSSPQDSNMNSGLHGNDSNASVNS).

Belongs to the TRAFAC class myosin-kinesin ATPase superfamily. Kinesin family. KIN-7 subfamily.

The sequence is that of Putative inactive kinesin-like protein KIN-7B from Oryza sativa subsp. japonica (Rice).